A 386-amino-acid chain; its full sequence is Succinate--CoA ligase [ADP-forming] subunit beta (386 aa).

One can recognise an ATP-grasp domain in the interval 9–244; that stretch reads KEILHKFNVP…YDEEVKEEIE (236 aa). Residues lysine 46, 53-55, glutamate 99, serine 102, and glutamate 107 each bind ATP; that span reads GRG. Mg(2+) contacts are provided by asparagine 199 and aspartate 213. Substrate-binding positions include asparagine 264 and 321–323; that span reads GIM.

This sequence belongs to the succinate/malate CoA ligase beta subunit family. In terms of assembly, heterotetramer of two alpha and two beta subunits. It depends on Mg(2+) as a cofactor.

The enzyme catalyses succinate + ATP + CoA = succinyl-CoA + ADP + phosphate. It carries out the reaction GTP + succinate + CoA = succinyl-CoA + GDP + phosphate. It participates in carbohydrate metabolism; tricarboxylic acid cycle; succinate from succinyl-CoA (ligase route): step 1/1. Functionally, succinyl-CoA synthetase functions in the citric acid cycle (TCA), coupling the hydrolysis of succinyl-CoA to the synthesis of either ATP or GTP and thus represents the only step of substrate-level phosphorylation in the TCA. The beta subunit provides nucleotide specificity of the enzyme and binds the substrate succinate, while the binding sites for coenzyme A and phosphate are found in the alpha subunit. The chain is Succinate--CoA ligase [ADP-forming] subunit beta from Wolbachia pipientis subsp. Culex pipiens (strain wPip).